We begin with the raw amino-acid sequence, 3838 residues long: Replicase polyprotein 1ab (3838 aa).

Residues 8 to 28 form a C4-type; atypical zinc finger; sequence CMCTPAARVFWNAGQVFCTRC. The region spanning 69–180 is the Peptidase C31 domain; sequence ECTPSGCCWL…QPFCPFEEAH (112 aa). A PCP1-alpha region spans residues 69–182; it reads ECTPSGCCWL…FCPFEEAHSD (114 aa). Catalysis depends on for Nsp1-alpha papain-like cysteine proteinase activity residues cysteine 76 and histidine 146. Residues 203 to 204 are important for host EIF2AK2 inhibition; that stretch reads MM. The segment at 269–384 is PCP1-beta; that stretch reads PNVFDGKCWL…IFRFGAHKWY (116 aa). In terms of domain architecture, Peptidase C32 spans 269-385; sequence PNVFDGKCWL…FRFGAHKWYG (117 aa). Residues cysteine 276 and histidine 345 each act as for Nsp1-beta papain-like cysteine proteinase activity in the active site. The tract at residues 418 to 505 is OTU-like; the sequence is ITTYSPPTDG…GVHWEVEVRS (88 aa). Positions 420-527 constitute a Peptidase C33 domain; it reads TYSPPTDGSC…VGVCSEGCVA (108 aa). Residues cysteine 429 and histidine 498 each act as for Nsp2 cysteine proteinase activity in the active site. 2 disordered regions span residues 728–758 and 1027–1064; these read AIGSAQSSSDSKRENMHNSREDEPLDLSHPA and SVTPPPKSAGLVLDQTVPPPTDIQQEDATPSDGLSHAS. A compositionally biased stretch (basic and acidic residues) spans 737-749; sequence DSKRENMHNSRED. A run of 5 helical transmembrane segments spans residues 1094–1114, 1117–1137, 1162–1182, 1211–1231, and 1235–1255; these read LMTWVFEVYSHLPAFILTLFS, GSMAPGDWLFAGVVLLALLLC, GVFGSWMAFAVFLFSTPSNPV, GLVVGPSGLLCVILGKLLGGS, and WHVILRLCMLTDLALSLVYVV. Residues 1132–1255 are HD1; the sequence is LALLLCRSYP…DLALSLVYVV (124 aa). The interval 1310–1334 is WCCH; the sequence is TGWRGCWRGESPIHQPHQKPIAYAN. The next 4 membrane-spanning stretches (helical) occupy residues 1450-1470, 1526-1546, 1556-1576, and 1592-1612; these read TLAVAQVSVWTLVHFILGLWF, EVGIFILVLVSLTALAHRLAL, AFCAYAWPMSSWLICFFPILL, and FLVFCMPAAGILSLGITGLLW. Positions 1451–1612 are HD2; sequence LAVAQVSVWT…LSLGITGLLW (162 aa). The Peptidase S32 domain maps to 1677–1879; the sequence is GAFRTHKPCL…SLLASVPVME (203 aa). Catalysis depends on charge relay system; for 3C-like serine proteinase activity residues histidine 1715, aspartate 1740, and serine 1793. Transmembrane regions (helical) follow at residues 1875–1895, 1916–1936, 1960–1980, 2003–2023, and 2029–2048; these read VPVMEGGLSTVQLLCVFFLLW, ILPAVLVRAVFSFALFILAWA, LAFYALGGVVGLAAEIGAFAG, SYVPIIIIGGLHALGVILWLF, and HNMLVGDGSFSSAFFLRYFA. Residues 1902 to 2023 form an HD3 region; that stretch reads WTPIVAVGFF…HALGVILWLF (122 aa). Residues 2364-2527 enclose the NiRAN domain; that stretch reads IISQLQGLTT…LPYKLYPVRG (164 aa). In terms of domain architecture, RdRp catalytic spans 2765–2899; the sequence is AGRCLEADLA…LYAERPTFPN (135 aa). Residues 3021–3084 form the AV ZBD domain; the sequence is GKKFRHCGIC…SPVGAGRSPL (64 aa). Zn(2+) is bound by residues cysteine 3027, cysteine 3030, cysteine 3040, cysteine 3045, histidine 3048, histidine 3050, histidine 3052, histidine 3054, cysteine 3061, histidine 3063, cysteine 3070, and cysteine 3073. The (+)RNA virus helicase ATP-binding domain occupies 3134-3293; the sequence is DLPDGDYQVV…VFDQMPQKQL (160 aa). Position 3168–3175 (3168–3175) interacts with ATP; sequence VGPPGSGK. One can recognise a (+)RNA virus helicase C-terminal domain in the interval 3294–3423; sequence TTIYRFGPNI…FSRGDDLVVL (130 aa). An AV-Nsp11N/CoV-Nsp15M domain is found at 3462–3559; that stretch reads EGSCMPLPQV…LTLYIRGEPQ (98 aa). Residues 3561-3683 form the NendoU domain; it reads LPETLVSTGR…MVWKGATAYF (123 aa). Residues histidine 3592, histidine 3607, and lysine 3636 contribute to the active site.

The protein belongs to the arteriviridae polyprotein family. Nsp1-alpha papain-like: Interacts with host RNF31. In terms of assembly, interacts with host EIF2AK2; this interaction occurs in host stress granules and leads to EIF2AK2 inhibition. Interacts with host G3BP1; this interaction probably plays a role in Nsp1-beta-mediated inhibition of host EIF2AK2. As to quaternary structure, interacts with host DDX18; this interaction redistributes host DDX18 to the cytoplasm. Interacts with host IFITM1. In terms of assembly, interacts with host DDX5. As to quaternary structure, interacts with host OTULIN. Interacts with host LGALS3. Post-translationally, specific enzymatic cleavages in vivo by its own proteases yield mature proteins. Nsp1 is autocleaved into two subunits, Nsp1-alpha and Nsp1-beta. There are two alternative pathways for processing. Either nsp4-5 is cleaved, which represents the major pathway or the nsp5-6 and nsp6-7 are processed, which represents the minor pathway. The major pathway occurs when nsp2 acts as a cofactor for nsp4.

It localises to the host nucleus. Its subcellular location is the host cytoplasm. The protein resides in the host membrane. The protein localises to the host endoplasmic reticulum. It is found in the host perinuclear region. It carries out the reaction RNA(n) + a ribonucleoside 5'-triphosphate = RNA(n+1) + diphosphate. The catalysed reaction is ATP + H2O = ADP + phosphate + H(+). It catalyses the reaction Thiol-dependent hydrolysis of ester, thioester, amide, peptide and isopeptide bonds formed by the C-terminal Gly of ubiquitin (a 76-residue protein attached to proteins as an intracellular targeting signal).. The enzyme catalyses uridylyl-uridylyl-ribonucleotide-RNA = a 3'-end uridylyl-2',3'-cyclophospho-uridine-RNA + a 5'-end dephospho-ribonucleoside-RNA. Contains the activities necessary for the transcription of negative stranded RNA, leader RNA, subgenomic mRNAs and progeny virion RNA as well as proteinases responsible for the cleavage of the polyprotein into functional products. Its function is as follows. Inhibits host IFN-beta production. Plays a role in the degradation of the host transcriptional activator CREBBP protein. The degradation of host CREBBP which is a key component of the IFN enhanceosome is likely responsible for the inhibition of interferon mediated by Nsp1-alpha. Also participates in the inhibition of host NF-kappa-B activation by counteracting LUBAC-dependent induction of NF-kappa-B. Reduces host NEMO ubiquitination by blocking the interaction between the two LUBAC complex components RNF31 and SHARPIN. In terms of biological role, plays a role in blocking host mRNA nuclear export to the cytoplasm and subversion of host protein synthesis. Additionally, inhibits the interferon-activated JAK/STAT signal transduction by mediating the ubiquitination and subsequent proteasomal degradation of host KPNA1. Repurposes the host antiviral stress granules into a proviral platform to counteract the EIF2AK2/PKR restriction, thereby regulating the host inflammatory response. Functionally, multifunctional protein that acts as a viral protease and as a viral antagonist of host immune response. Cleaves the nsp2/nsp3 site in the viral polyprotein. Displays deubiquitinating activity that cleaves both ubiquitinated and ISGylated products and therefore inhibits ubiquitin and ISG15-dependent host innate immunity. Also deubiquinates host NFKBIA, thereby interfering with NFKBIA degradation and impairing subsequent NF-kappa-B activation. Plays a role in the inhibition of the immune response by interacting with host IFITM1. This interaction leads to the proteasomal degradation of the IFN-induced antiviral protein IFITM1. Its function is as follows. Cleaves the majority of cleavage sites present in the C-terminus of the polyprotein. Triggers host apoptosis through caspase-3, -8, and -9 activations. Subverts host innate immune responses through its protease activity. Targets the NF-kappa-B essential modulator NEMO and mediates its cleavage. Blocks host interferon beta induction and downstream signaling by cleaving mitochondrial MAVS, dislodging it from the mitochondria. Impairs host defense by cleaving host mRNA-decapping enzyme DCP1A to attenuate its antiviral activity. In terms of biological role, plays a role in the initial induction of autophagosomes from host endoplasmic reticulum. Functionally, plays a role in the inhibition of host STAT3 signaling pathway by inducing the degradation of STAT3. Responsible for replication and transcription of the viral RNA genome. Its function is as follows. Displays RNA and DNA duplex-unwinding activities with 5' to 3' polarity. In terms of biological role, plays a role in viral transcription/replication and prevents the simultaneous activation of host cell dsRNA sensors, such as MDA5/IFIH1, OAS, PKR and NLRP3 inflammasome. Acts by degrading the 5'-polyuridines generated during replication of the poly(A) region of viral genomic and subgenomic RNAs. Catalyzes a two-step reaction in which a 2'3'-cyclic phosphate (2'3'-cP) is first generated by 2'-O transesterification, which is then hydrolyzed to a 3'-phosphate (3'-P). If not degraded, poly(U) RNA would hybridize with poly(A) RNA tails and activate host dsRNA sensors. Also plays a role in the inhibition of host type I interferon production by recruiting host OTULIN to promote removal of linear ubiquitination targeting host NEMO. The protein is Replicase polyprotein 1ab of Sus scrofa (Pig).